A 75-amino-acid polypeptide reads, in one-letter code: uncharacterized protein (75 aa).

The chain crosses the membrane as a helical span at residues 49–69; sequence VDIVAVATTLPFIVAVICIVF.

It localises to the host membrane. This is an uncharacterized protein from Saccharolobus islandicus (Sulfolobus islandicus).